A 913-amino-acid chain; its full sequence is Tyrosine-protein phosphatase non-receptor type 3 (913 aa).

Positions 29–312 (VICSIRFLDG…EHHSFFQAKK (284 aa)) constitute an FERM domain. A phosphoserine mark is found at Ser-357, Ser-359, and Ser-367. Disordered stretches follow at residues 364–400 (ETKSLPSRSPPITPNWRSPRLRHEIRKPRHSSADNLA) and 417–473 (KGPL…PDGV). The residue at position 376 (Thr-376) is a Phosphothreonine. Ser-381 carries the post-translational modification Phosphoserine. A compositionally biased stretch (basic residues) spans 382–393 (PRLRHEIRKPRH). Ser-425 carries the post-translational modification Phosphoserine. Positions 441 to 453 (SENNPAQSCLTQK) are enriched in polar residues. Over residues 454-470 (SSSSVSPSSNAPGSCSP) the composition is skewed to low complexity. The PDZ domain occupies 510-582 (LIRITPDEEG…DQVVMFIKAS (73 aa)). One can recognise a Tyrosine-protein phosphatase domain in the interval 646 to 901 (VLIQFEQLYR…KFVCEAILRV (256 aa)). Residues Asp-811, 842–848 (CSAGIGR), and Gln-886 each bind substrate. Residue Cys-842 is the Phosphocysteine intermediate of the active site.

Belongs to the protein-tyrosine phosphatase family. Non-receptor class subfamily.

The protein localises to the cell membrane. It is found in the cytoplasm. The protein resides in the cytoskeleton. It catalyses the reaction O-phospho-L-tyrosyl-[protein] + H2O = L-tyrosyl-[protein] + phosphate. May act at junctions between the membrane and the cytoskeleton. This chain is Tyrosine-protein phosphatase non-receptor type 3 (Ptpn3), found in Mus musculus (Mouse).